Here is a 139-residue protein sequence, read N- to C-terminus: MKKNTLLNSELSYIIATLGHTDEITICDAGLPIPDASQRIDLALIQGIPTFIDTVKATLAEMQIEGVIVAEEFKTVSPQMHDELMTLIAAEEAQCGKSITVSYIPHEEFKIHTRESKAIVRTGECTPYANVIFQSGVVF.

Residue histidine 20 is the Proton donor of the active site. Substrate is bound by residues aspartate 28, histidine 106, and 128-130; that span reads YAN.

The protein belongs to the RbsD / FucU family. RbsD subfamily. In terms of assembly, homodecamer.

Its subcellular location is the cytoplasm. It catalyses the reaction beta-D-ribopyranose = beta-D-ribofuranose. The protein operates within carbohydrate metabolism; D-ribose degradation; D-ribose 5-phosphate from beta-D-ribopyranose: step 1/2. Functionally, catalyzes the interconversion of beta-pyran and beta-furan forms of D-ribose. The chain is D-ribose pyranase from Aliivibrio fischeri (strain MJ11) (Vibrio fischeri).